A 258-amino-acid polypeptide reads, in one-letter code: MPVAVRVIPCLDVKNGRVVKGVNFEGLKDAGDPVELAARYDAEGADELTFLDVSASQDGRGTMLEVVRRTADQVFIPLTVGGGVRSAEDVDQLLRAGADKVSVNTSAIARPELLQELSQRFGAQCVVLSVDARRVPEGGKPQPSGFEVTTHGGTRSAGIDAVEWAQKGEALGVGEILLNSMDGDGTKRGFDLELIEKVRHAVSIPVIASGGAGKPEDFPPAIASGADAVLAASIFHFGEVTISEVKKQVVAAGYEVRS.

Residues D12 and D131 contribute to the active site.

Belongs to the HisA/HisF family. As to quaternary structure, heterodimer of HisH and HisF.

The protein resides in the cytoplasm. The catalysed reaction is 5-[(5-phospho-1-deoxy-D-ribulos-1-ylimino)methylamino]-1-(5-phospho-beta-D-ribosyl)imidazole-4-carboxamide + L-glutamine = D-erythro-1-(imidazol-4-yl)glycerol 3-phosphate + 5-amino-1-(5-phospho-beta-D-ribosyl)imidazole-4-carboxamide + L-glutamate + H(+). The protein operates within amino-acid biosynthesis; L-histidine biosynthesis; L-histidine from 5-phospho-alpha-D-ribose 1-diphosphate: step 5/9. Its function is as follows. IGPS catalyzes the conversion of PRFAR and glutamine to IGP, AICAR and glutamate. The HisF subunit catalyzes the cyclization activity that produces IGP and AICAR from PRFAR using the ammonia provided by the HisH subunit. In Corynebacterium diphtheriae (strain ATCC 700971 / NCTC 13129 / Biotype gravis), this protein is Imidazole glycerol phosphate synthase subunit HisF.